A 252-amino-acid chain; its full sequence is 5-oxoprolinase subunit A (252 aa).

It belongs to the LamB/PxpA family. As to quaternary structure, forms a complex composed of PxpA, PxpB and PxpC.

It carries out the reaction 5-oxo-L-proline + ATP + 2 H2O = L-glutamate + ADP + phosphate + H(+). Functionally, catalyzes the cleavage of 5-oxoproline to form L-glutamate coupled to the hydrolysis of ATP to ADP and inorganic phosphate. This chain is 5-oxoprolinase subunit A, found in Bordetella pertussis (strain Tohama I / ATCC BAA-589 / NCTC 13251).